The following is an 849-amino-acid chain: Villin-1 (849 aa).

Gelsolin-like repeat units lie at residues 30–107, 147–213, 262–335, 405–475, and 527–566; these read IEKS…DKFL, RVTE…EDGK, VPVE…TVEF, QEQL…PEMF, and AIQV…DHNL. Residues 739–849 are disordered; it reads ETPERSLRKS…AVATGTPRRL (111 aa). Low complexity-rich tracts occupy residues 747 to 782 and 791 to 823; these read KSSS…SAST and PAAL…STPS.

It belongs to the villin/gelsolin family.

Its subcellular location is the cytoplasm. It localises to the cytoskeleton. Its function is as follows. Ca(2+)-independent actin-binding protein. Binds actin microfilaments (MFs). Involved in actin filament bundling, severing and capping. Caps the barbed end of actin filaments and protects them from disassembly. Promotes VLN3-mediated MF severing. The sequence is that of Villin-1 from Oryza sativa subsp. indica (Rice).